A 612-amino-acid polypeptide reads, in one-letter code: Dihydroxy-acid dehydratase (612 aa).

Aspartate 81 lines the Mg(2+) pocket. Cysteine 122 provides a ligand contact to [2Fe-2S] cluster. Mg(2+) contacts are provided by aspartate 123 and lysine 124. Lysine 124 bears the N6-carboxylysine mark. Residue cysteine 195 coordinates [2Fe-2S] cluster. A Mg(2+)-binding site is contributed by glutamate 491. The active-site Proton acceptor is serine 517.

This sequence belongs to the IlvD/Edd family. In terms of assembly, homodimer. It depends on [2Fe-2S] cluster as a cofactor. Mg(2+) is required as a cofactor.

It carries out the reaction (2R)-2,3-dihydroxy-3-methylbutanoate = 3-methyl-2-oxobutanoate + H2O. The catalysed reaction is (2R,3R)-2,3-dihydroxy-3-methylpentanoate = (S)-3-methyl-2-oxopentanoate + H2O. It participates in amino-acid biosynthesis; L-isoleucine biosynthesis; L-isoleucine from 2-oxobutanoate: step 3/4. The protein operates within amino-acid biosynthesis; L-valine biosynthesis; L-valine from pyruvate: step 3/4. Its function is as follows. Functions in the biosynthesis of branched-chain amino acids. Catalyzes the dehydration of (2R,3R)-2,3-dihydroxy-3-methylpentanoate (2,3-dihydroxy-3-methylvalerate) into 2-oxo-3-methylpentanoate (2-oxo-3-methylvalerate) and of (2R)-2,3-dihydroxy-3-methylbutanoate (2,3-dihydroxyisovalerate) into 2-oxo-3-methylbutanoate (2-oxoisovalerate), the penultimate precursor to L-isoleucine and L-valine, respectively. This is Dihydroxy-acid dehydratase from Haemophilus influenzae (strain PittGG).